Reading from the N-terminus, the 258-residue chain is Phosphate import ATP-binding protein PstB (258 aa).

One can recognise an ABC transporter domain in the interval 5–247 (IDVSGLNAYY…ERIFSNPSVQ (243 aa)). 37–44 (GPSGCGKS) contributes to the ATP binding site.

Belongs to the ABC transporter superfamily. Phosphate importer (TC 3.A.1.7) family. The complex is composed of two ATP-binding proteins (PstB), two transmembrane proteins (PstC and PstA) and a solute-binding protein (PstS).

It is found in the cell membrane. It carries out the reaction phosphate(out) + ATP + H2O = ADP + 2 phosphate(in) + H(+). Its function is as follows. Part of the ABC transporter complex PstSACB involved in phosphate import. Responsible for energy coupling to the transport system. The polypeptide is Phosphate import ATP-binding protein PstB (Streptomyces coelicolor (strain ATCC BAA-471 / A3(2) / M145)).